The following is a 606-amino-acid chain: Aspartate--tRNA(Asp/Asn) ligase (606 aa).

Glu-177 serves as a coordination point for L-aspartate. An aspartate region spans residues 201 to 204; sequence QLFK. Arg-223 is an L-aspartate binding site. ATP-binding positions include 223–225 and Gln-232; that span reads RDE. His-461 lines the L-aspartate pocket. Glu-499 lines the ATP pocket. Arg-506 is an L-aspartate binding site. An ATP-binding site is contributed by 551 to 554; it reads GMDR.

The protein belongs to the class-II aminoacyl-tRNA synthetase family. Type 1 subfamily. Homodimer.

Its subcellular location is the cytoplasm. It catalyses the reaction tRNA(Asx) + L-aspartate + ATP = L-aspartyl-tRNA(Asx) + AMP + diphosphate. In terms of biological role, aspartyl-tRNA synthetase with relaxed tRNA specificity since it is able to aspartylate not only its cognate tRNA(Asp) but also tRNA(Asn). Reaction proceeds in two steps: L-aspartate is first activated by ATP to form Asp-AMP and then transferred to the acceptor end of tRNA(Asp/Asn). This chain is Aspartate--tRNA(Asp/Asn) ligase, found in Prochlorococcus marinus (strain MIT 9303).